Consider the following 465-residue polypeptide: Cysteine--tRNA ligase (465 aa).

A Zn(2+)-binding site is contributed by cysteine 30. Positions 32 to 42 (MTVYDYCHVGH) match the 'HIGH' region motif. Residues cysteine 214, histidine 239, and glutamate 243 each coordinate Zn(2+). The short motif at 271 to 275 (KMSKS) is the 'KMSKS' region element. Lysine 274 is an ATP binding site.

This sequence belongs to the class-I aminoacyl-tRNA synthetase family. As to quaternary structure, monomer. It depends on Zn(2+) as a cofactor.

Its subcellular location is the cytoplasm. The enzyme catalyses tRNA(Cys) + L-cysteine + ATP = L-cysteinyl-tRNA(Cys) + AMP + diphosphate. The polypeptide is Cysteine--tRNA ligase (Ralstonia nicotianae (strain ATCC BAA-1114 / GMI1000) (Ralstonia solanacearum)).